Reading from the N-terminus, the 396-residue chain is L-lactate dehydrogenase (396 aa).

Residues 1–380 (MIISAASDYR…SGDSLVQELG (380 aa)) form the FMN hydroxy acid dehydrogenase domain. Substrate is bound at residue Tyr24. FMN contacts are provided by Ser106 and Gln127. Tyr129 serves as a coordination point for substrate. Thr155 is a binding site for FMN. Arg164 is a binding site for substrate. Position 251 (Lys251) interacts with FMN. His275 functions as the Proton acceptor in the catalytic mechanism. Arg278 serves as a coordination point for substrate. Position 306 to 330 (306 to 330 (DSGIRNGLDVVRMIALGADTVLLGR)) interacts with FMN.

The protein belongs to the FMN-dependent alpha-hydroxy acid dehydrogenase family. FMN is required as a cofactor.

The protein resides in the cell inner membrane. The catalysed reaction is (S)-lactate + A = pyruvate + AH2. Catalyzes the conversion of L-lactate to pyruvate. Is coupled to the respiratory chain. The sequence is that of L-lactate dehydrogenase from Salmonella choleraesuis (strain SC-B67).